A 346-amino-acid polypeptide reads, in one-letter code: D-alanine--D-alanine ligase (346 aa).

An ATP-grasp domain is found at Lys133–Lys327. Leu159–Tyr211 contributes to the ATP binding site. The Mg(2+) site is built by Asp284, Glu296, and Asn298.

Belongs to the D-alanine--D-alanine ligase family. The cofactor is Mg(2+). Requires Mn(2+) as cofactor.

The protein localises to the cytoplasm. The catalysed reaction is 2 D-alanine + ATP = D-alanyl-D-alanine + ADP + phosphate + H(+). It participates in cell wall biogenesis; peptidoglycan biosynthesis. Its function is as follows. Cell wall formation. The protein is D-alanine--D-alanine ligase of Campylobacter jejuni subsp. jejuni serotype O:2 (strain ATCC 700819 / NCTC 11168).